A 128-amino-acid chain; its full sequence is L-ectoine synthase (128 aa).

The protein belongs to the ectoine synthase family.

The enzyme catalyses (2S)-4-acetamido-2-aminobutanoate = L-ectoine + H2O. Its pathway is amine and polyamine biosynthesis; ectoine biosynthesis; L-ectoine from L-aspartate 4-semialdehyde: step 3/3. Catalyzes the circularization of gamma-N-acetyl-alpha,gamma-diaminobutyric acid (ADABA) to ectoine (1,4,5,6-tetrahydro-2-methyl-4-pyrimidine carboxylic acid), which is an excellent osmoprotectant. The sequence is that of L-ectoine synthase from Vibrio atlanticus (strain LGP32) (Vibrio splendidus (strain Mel32)).